The following is a 310-amino-acid chain: GMP synthase [glutamine-hydrolyzing] subunit B (310 aa).

The 184-residue stretch at 2–185 (FDAKSFIEES…LGLPEKIAHR (184 aa)) folds into the GMPS ATP-PPase domain. ATP is bound at residue 29-35 (SGGVDSS).

In terms of assembly, heterodimer composed of a glutamine amidotransferase subunit (A) and a GMP-binding subunit (B).

The catalysed reaction is XMP + L-glutamine + ATP + H2O = GMP + L-glutamate + AMP + diphosphate + 2 H(+). It functions in the pathway purine metabolism; GMP biosynthesis; GMP from XMP (L-Gln route): step 1/1. Functionally, catalyzes the synthesis of GMP from XMP. This is GMP synthase [glutamine-hydrolyzing] subunit B from Methanococcus vannielii (strain ATCC 35089 / DSM 1224 / JCM 13029 / OCM 148 / SB).